The chain runs to 129 residues: MAKANSRVKKKAKQVVTDAVAHVHATFNNTIVTITDRQGNALCWATSGGSGFRGSRKSTPFAAQVAAERAGQMATEYGVKNMDVMVKGPGPGRDSAVRGLNSVGFKITSISDVTPIPHNGCRPPKKRRV.

This sequence belongs to the universal ribosomal protein uS11 family. In terms of assembly, part of the 30S ribosomal subunit. Interacts with proteins S7 and S18. Binds to IF-3.

Its function is as follows. Located on the platform of the 30S subunit, it bridges several disparate RNA helices of the 16S rRNA. Forms part of the Shine-Dalgarno cleft in the 70S ribosome. This Hydrogenovibrio crunogenus (strain DSM 25203 / XCL-2) (Thiomicrospira crunogena) protein is Small ribosomal subunit protein uS11.